A 213-amino-acid chain; its full sequence is Probable inactive serine/threonine-protein kinase DDB_G0280559 (213 aa).

The Protein kinase domain maps to 1-211; sequence MVLRYSYVFK…WNEIVNHSFF (211 aa).

It belongs to the protein kinase superfamily. Ser/Thr protein kinase family.

This Dictyostelium discoideum (Social amoeba) protein is Probable inactive serine/threonine-protein kinase DDB_G0280559.